We begin with the raw amino-acid sequence, 154 residues long: 6,7-dimethyl-8-ribityllumazine synthase (154 aa).

5-amino-6-(D-ribitylamino)uracil contacts are provided by residues phenylalanine 23, 57–59 (AFE), and 81–83 (AVI). 86–87 (AT) provides a ligand contact to (2S)-2-hydroxy-3-oxobutyl phosphate. The active-site Proton donor is the histidine 89. Phenylalanine 114 contributes to the 5-amino-6-(D-ribitylamino)uracil binding site. Residue arginine 128 participates in (2S)-2-hydroxy-3-oxobutyl phosphate binding.

It belongs to the DMRL synthase family.

The catalysed reaction is (2S)-2-hydroxy-3-oxobutyl phosphate + 5-amino-6-(D-ribitylamino)uracil = 6,7-dimethyl-8-(1-D-ribityl)lumazine + phosphate + 2 H2O + H(+). The protein operates within cofactor biosynthesis; riboflavin biosynthesis; riboflavin from 2-hydroxy-3-oxobutyl phosphate and 5-amino-6-(D-ribitylamino)uracil: step 1/2. Its function is as follows. Catalyzes the formation of 6,7-dimethyl-8-ribityllumazine by condensation of 5-amino-6-(D-ribitylamino)uracil with 3,4-dihydroxy-2-butanone 4-phosphate. This is the penultimate step in the biosynthesis of riboflavin. The sequence is that of 6,7-dimethyl-8-ribityllumazine synthase from Nautilia profundicola (strain ATCC BAA-1463 / DSM 18972 / AmH).